A 207-amino-acid chain; its full sequence is MTVANWQVRDLTLILRTGEMKSRLEQARTDFGALLSETVYFQPSAIRLGEFDDEYIHSRQELVYVYLREDIARQCALRRNLPSNSSNFGTMATAIPPWLMNARSLNRVMQERCDQGGLVNYYQGPHTNQFFLAIMPSNCFVRFGTDIINNENYGFXARRGNTLEEGEDDDDEMDDEGEAGGAEPRECQIGNLINYPIIALGSCDLSA.

The segment at 161–185 (NTLEEGEDDDDEMDDEGEAGGAEPR) is disordered. Residues 164-178 (EEGEDDDDEMDDEGE) show a composition bias toward acidic residues.

Functionally, involved in tumor formation and increases auxin and cytokinin effects in host plants. This is Protein 6b (6b) from Agrobacterium tumefaciens (strain 15955).